A 365-amino-acid polypeptide reads, in one-letter code: tRNA-specific 2-thiouridylase MnmA (365 aa).

Residues 6-13 (AMSGGVDS) and L32 contribute to the ATP site. C101 serves as the catalytic Nucleophile. Cysteines 101 and 199 form a disulfide. G125 serves as a coordination point for ATP. The interaction with tRNA stretch occupies residues 149–151 (KDQ). The active-site Cysteine persulfide intermediate is the C199.

The protein belongs to the MnmA/TRMU family.

The protein localises to the cytoplasm. The catalysed reaction is S-sulfanyl-L-cysteinyl-[protein] + uridine(34) in tRNA + AH2 + ATP = 2-thiouridine(34) in tRNA + L-cysteinyl-[protein] + A + AMP + diphosphate + H(+). In terms of biological role, catalyzes the 2-thiolation of uridine at the wobble position (U34) of tRNA, leading to the formation of s(2)U34. The sequence is that of tRNA-specific 2-thiouridylase MnmA from Corynebacterium glutamicum (strain R).